The sequence spans 259 residues: Protein IQ-DOMAIN 10 (259 aa).

Positions 18 to 39 (KNKSNRGNVHSETSNRVKPVES) are disordered. One can recognise an IQ domain in the interval 50–77 (EVAVIRIQKAFRAFKARKRLCSLKSARR). Residues 61-71 (RAFKARKRLCS) are calmodulin-binding. The disordered stretch occupies residues 226–259 (KPSKKPEKSSPNNVITKTSAKPDEVGNSKKPGSG).

This sequence belongs to the IQD family. Binds to multiple calmodulin (CaM) in the presence of Ca(2+) and CaM-like proteins.

Its subcellular location is the nucleus. It is found in the cytoplasm. The protein localises to the cytoskeleton. Functionally, may be involved in cooperative interactions with calmodulins or calmodulin-like proteins. Recruits calmodulin proteins to microtubules, thus being a potential scaffold in cellular signaling and trafficking. May associate with nucleic acids and regulate gene expression at the transcriptional or post-transcriptional level. The chain is Protein IQ-DOMAIN 10 from Arabidopsis thaliana (Mouse-ear cress).